A 414-amino-acid polypeptide reads, in one-letter code: Probable acetyl-CoA acetyltransferase (414 aa).

Cys110 functions as the Acyl-thioester intermediate in the catalytic mechanism. Residues Tyr205, Lys244–Leu246, and Lys249 each bind CoA. Tyr205 is a K(+) binding site. Positions 266 and 268 each coordinate K(+). Position 269 (Ser269) interacts with CoA. Position 366 (Val366) interacts with K(+). Catalysis depends on proton acceptor residues His370 and Cys400.

This sequence belongs to the thiolase-like superfamily. Thiolase family.

It carries out the reaction 2 acetyl-CoA = acetoacetyl-CoA + CoA. This Dictyostelium discoideum (Social amoeba) protein is Probable acetyl-CoA acetyltransferase.